Consider the following 391-residue polypeptide: GATA-binding factor 6-B (391 aa).

Residues 57 to 69 (GTHSVNSHWSQAT) show a composition bias toward polar residues. The disordered stretch occupies residues 57-107 (GTHSVNSHWSQATSESSSYSSSSPHPSSRYHYSPSPPMANGSTRDTGYSSS). Residues 70-89 (SESSSYSSSSPHPSSRYHYS) show a composition bias toward low complexity. Positions 96–107 (NGSTRDTGYSSS) are enriched in polar residues. 2 GATA-type zinc fingers span residues 182–206 (CVNCGSVQTPLWRRDGTGHYLCNAC) and 236–260 (CANCHTTTTTLWRRNTEGEPVCNAC). A disordered region spans residues 277-334 (KEGIQTRKRKPKNLNKSKSSSSNGNSSHHITMTPTSTTSSTNSDDCIKNGSPSQNTAP). Over residues 282-291 (TRKRKPKNLN) the composition is skewed to basic residues. Residues 292–319 (KSKSSSSNGNSSHHITMTPTSTTSSTNS) show a composition bias toward low complexity.

In embryos, expressed in the presumptive heart mesoderm. In adults, widely distributed but predominant in the heart.

It is found in the nucleus. In terms of biological role, transcriptional activator that binds 5'-GATA-3'-containing motifs within gene promoters. Regulates cardiac-specific transcription during embryogenesis and thereby cardiogenesis. In Xenopus laevis (African clawed frog), this protein is GATA-binding factor 6-B (gata6-b).